A 165-amino-acid chain; its full sequence is Phosphopantetheine adenylyltransferase (165 aa).

Position 9 (T9) interacts with substrate. Residues 9 to 10 (TF) and H17 contribute to the ATP site. Substrate-binding residues include K41, L73, and R87. Residues 88 to 90 (GLR), E98, and 123 to 129 (YQFISGT) each bind ATP.

This sequence belongs to the bacterial CoaD family. As to quaternary structure, homohexamer. Mg(2+) is required as a cofactor.

It localises to the cytoplasm. The catalysed reaction is (R)-4'-phosphopantetheine + ATP + H(+) = 3'-dephospho-CoA + diphosphate. It functions in the pathway cofactor biosynthesis; coenzyme A biosynthesis; CoA from (R)-pantothenate: step 4/5. Reversibly transfers an adenylyl group from ATP to 4'-phosphopantetheine, yielding dephospho-CoA (dPCoA) and pyrophosphate. The polypeptide is Phosphopantetheine adenylyltransferase (Burkholderia orbicola (strain MC0-3)).